The chain runs to 346 residues: Quinolinate synthase (346 aa).

Iminosuccinate-binding residues include H47 and S68. C113 is a binding site for [4Fe-4S] cluster. Residues 139–141 (YAN) and S156 each bind iminosuccinate. C200 is a [4Fe-4S] cluster binding site. Residues 226–228 (HPE) and T243 contribute to the iminosuccinate site. C297 is a [4Fe-4S] cluster binding site.

The protein belongs to the quinolinate synthase family. Type 1 subfamily. It depends on [4Fe-4S] cluster as a cofactor.

It localises to the cytoplasm. The catalysed reaction is iminosuccinate + dihydroxyacetone phosphate = quinolinate + phosphate + 2 H2O + H(+). The protein operates within cofactor biosynthesis; NAD(+) biosynthesis; quinolinate from iminoaspartate: step 1/1. Catalyzes the condensation of iminoaspartate with dihydroxyacetone phosphate to form quinolinate. The chain is Quinolinate synthase from Photorhabdus laumondii subsp. laumondii (strain DSM 15139 / CIP 105565 / TT01) (Photorhabdus luminescens subsp. laumondii).